A 283-amino-acid polypeptide reads, in one-letter code: Peroxisomal membrane protein PEX18 (283 aa).

Residues 179-201 (SSLEEDVHTEEENSGTSLEDEET) form a disordered region. Positions 180–200 (SLEEDVHTEEENSGTSLEDEE) are enriched in acidic residues.

In terms of assembly, interacts with PEX7; The interaction with PEX7 stabilizes PEX18. Interacts with PEX13. In terms of processing, ubiquitinated in a UBC4/UBC5 dependent manner.

It is found in the cytoplasm. Its subcellular location is the peroxisome membrane. Involved in peroxisome biogenesis and the import of peroxisomal matrix proteins that contain the peroxisomal targeting sequence PTS2. Required for peroxisomal targeting of PEX7 and growth on oleate. This chain is Peroxisomal membrane protein PEX18 (PEX18), found in Saccharomyces cerevisiae (strain ATCC 204508 / S288c) (Baker's yeast).